A 232-amino-acid chain; its full sequence is tRNA1(Val) (adenine(37)-N6)-methyltransferase (232 aa).

It belongs to the methyltransferase superfamily. tRNA (adenine-N(6)-)-methyltransferase family.

The protein resides in the cytoplasm. It carries out the reaction adenosine(37) in tRNA1(Val) + S-adenosyl-L-methionine = N(6)-methyladenosine(37) in tRNA1(Val) + S-adenosyl-L-homocysteine + H(+). Specifically methylates the adenine in position 37 of tRNA(1)(Val) (anticodon cmo5UAC). This Haemophilus influenzae (strain PittEE) protein is tRNA1(Val) (adenine(37)-N6)-methyltransferase.